A 693-amino-acid polypeptide reads, in one-letter code: Elongation factor G (693 aa).

Residues 8-283 (PQQRNIGIMA…AVVEYLPSPV (276 aa)) enclose the tr-type G domain. GTP is bound by residues 17 to 24 (AHIDAGKT), 81 to 85 (DTPGH), and 135 to 138 (NKMD).

The protein belongs to the TRAFAC class translation factor GTPase superfamily. Classic translation factor GTPase family. EF-G/EF-2 subfamily.

The protein localises to the cytoplasm. Catalyzes the GTP-dependent ribosomal translocation step during translation elongation. During this step, the ribosome changes from the pre-translocational (PRE) to the post-translocational (POST) state as the newly formed A-site-bound peptidyl-tRNA and P-site-bound deacylated tRNA move to the P and E sites, respectively. Catalyzes the coordinated movement of the two tRNA molecules, the mRNA and conformational changes in the ribosome. This Oleidesulfovibrio alaskensis (strain ATCC BAA-1058 / DSM 17464 / G20) (Desulfovibrio alaskensis) protein is Elongation factor G.